Consider the following 552-residue polypeptide: Hyaluronan synthase 2 (552 aa).

The Cytoplasmic portion of the chain corresponds to 1–11 (MHCERFLCILR). Residues 12–32 (IIGTTLFGVSLLLGITAAYIV) form a helical membrane-spanning segment. Topologically, residues 33–45 (GYQFIQTDNYYFS) are extracellular. The chain crosses the membrane as a helical span at residues 46–66 (FGLYGAFLASHLIIQSLFAFL). Residues 67 to 374 (EHRKMKKSLE…NAMWFHKHHL (308 aa)) lie on the Cytoplasmic side of the membrane. The residue at position 110 (Thr-110) is a Phosphothreonine. Lys-190 is covalently cross-linked (Glycyl lysine isopeptide (Lys-Gly) (interchain with G-Cter in ubiquitin)). Ser-221 carries O-linked (GlcNAc) serine glycosylation. Thr-328 is modified (phosphothreonine). The chain crosses the membrane as a helical span at residues 375–395 (WMTYEAVITGFFPFFLIATVI). Topologically, residues 396–402 (QLFYRGK) are extracellular. The helical transmembrane segment at 403-423 (IWNTLLFLLTVQLVGLIKSSF) threads the bilayer. Over 424–429 (ASCLRG) the chain is Cytoplasmic. The chain crosses the membrane as a helical span at residues 430–450 (NIVMVFMSLYSVLYMSSLLPA). Over 451–475 (KMFAIATINKAGWGTSGRKTIVVNF) the chain is Extracellular. The helical transmembrane segment at 476-496 (IGLIPVSVWFTILLGGVIFTI) threads the bilayer. Over 497–510 (YKESKKPFSESKQT) the chain is Cytoplasmic. A helical membrane pass occupies residues 511–531 (VLIVGTLLYACYWVMLLTLYV). Over 532–552 (VLINKCGRRKKGQQYDMVLDV) the chain is Extracellular.

Belongs to the NodC/HAS family. In terms of assembly, homodimer; dimerization promotes enzymatic activity. Forms heterodimer with HAS3. Forms heterodimer with HAS1. The cofactor is Mg(2+). Post-translationally, phosphorylation at Thr-328 is essential for hyaluronan synthase activity. O-GlcNAcylation at Ser-221 increases the stability of HAS2 and plasma membrane localization. In terms of processing, ubiquitination at Lys-190; this ubiquitination is essential for hyaluronan synthase activity and homo- or hetero-oligomerization. Can also be poly-ubiquitinated. Deubiquitinated by USP17 and USP4. USP17 efficiently removes 'Lys-63'- and 'Lys-48'-linked polyubiquitin chains, whereas USP4 preferentially removes monoubiquitination and, partially, both 'Lys-63'- and 'Lys-48'-linked polyubiquitin chain. In terms of tissue distribution, expressed in corneal endothelial cells.

Its subcellular location is the cell membrane. The protein localises to the endoplasmic reticulum membrane. It localises to the vesicle. The protein resides in the golgi apparatus membrane. It is found in the lysosome. The enzyme catalyses [hyaluronan](n) + UDP-N-acetyl-alpha-D-glucosamine = N-acetyl-beta-D-glucosaminyl-(1-&gt;4)-[hyaluronan](n) + UDP + H(+). It catalyses the reaction N-acetyl-beta-D-glucosaminyl-(1-&gt;4)-[hyaluronan](n) + UDP-alpha-D-glucuronate = [hyaluronan](n+1) + UDP + H(+). The protein operates within glycan biosynthesis; hyaluronan biosynthesis. Catalyzes the addition of GlcNAc or GlcUA monosaccharides to the nascent hyaluronan polymer. Therefore, it is essential to hyaluronan synthesis a major component of most extracellular matrices that has a structural role in tissues architectures and regulates cell adhesion, migration and differentiation. This is one of three isoenzymes responsible for cellular hyaluronan synthesis and it is particularly responsible for the synthesis of high molecular mass hyaluronan. In Bos taurus (Bovine), this protein is Hyaluronan synthase 2 (HAS2).